A 131-amino-acid polypeptide reads, in one-letter code: Small ribosomal subunit protein uS11 (131 aa).

This sequence belongs to the universal ribosomal protein uS11 family. As to quaternary structure, part of the 30S ribosomal subunit. Interacts with proteins S7 and S18. Binds to IF-3.

Its function is as follows. Located on the platform of the 30S subunit, it bridges several disparate RNA helices of the 16S rRNA. Forms part of the Shine-Dalgarno cleft in the 70S ribosome. This Natranaerobius thermophilus (strain ATCC BAA-1301 / DSM 18059 / JW/NM-WN-LF) protein is Small ribosomal subunit protein uS11.